Consider the following 156-residue polypeptide: Ribonuclease pancreatic (156 aa).

An N-terminal signal peptide occupies residues 1-28 (MALEKSLVLLPLLVLILLVLGWVQPSLG). 2 residues coordinate substrate: K35 and R38. H40 (proton acceptor) is an active-site residue. N-linked (GlcNAc...) asparagine glycosylation is found at N50 and N62. 4 disulfides stabilise this stretch: C54–C112, C68–C123, C86–C138, and C93–C100. Residues 69–73 (KPVNT) and K94 each bind substrate. A glycan (N-linked (GlcNAc...) asparagine) is linked at N104. A substrate-binding site is contributed by R113. The active-site Proton donor is H147.

The protein belongs to the pancreatic ribonuclease family. As to quaternary structure, monomer. Interacts with and forms tight 1:1 complexes with RNH1. Dimerization of two such complexes may occur. Interaction with RNH1 inhibits this protein. As to expression, pancreas and other tissues and body fluids (indicating it may have other physiological functions besides its role in digestion).

The protein localises to the secreted. It catalyses the reaction an [RNA] containing cytidine + H2O = an [RNA]-3'-cytidine-3'-phosphate + a 5'-hydroxy-ribonucleotide-3'-[RNA].. The enzyme catalyses an [RNA] containing uridine + H2O = an [RNA]-3'-uridine-3'-phosphate + a 5'-hydroxy-ribonucleotide-3'-[RNA].. Its function is as follows. Endonuclease that catalyzes the cleavage of RNA on the 3' side of pyrimidine nucleotides. Acts on single-stranded and double-stranded RNA. The chain is Ribonuclease pancreatic (RNASE1) from Pongo pygmaeus (Bornean orangutan).